A 417-amino-acid chain; its full sequence is Tyrosine--tRNA ligase (417 aa).

L-tyrosine is bound at residue tyrosine 39. Positions 44 to 53 match the 'HIGH' region motif; it reads PTAASLHAGG. L-tyrosine contacts are provided by tyrosine 176 and glutamine 180. Positions 236 to 240 match the 'KMSKS' region motif; it reads KMGKS. Lysine 239 contacts ATP. The region spanning 350–417 is the S4 RNA-binding domain; that stretch reads LGLLTLLVRA…KKKHLLVRPV (68 aa).

Belongs to the class-I aminoacyl-tRNA synthetase family. TyrS type 1 subfamily. In terms of assembly, homodimer.

The protein localises to the cytoplasm. The catalysed reaction is tRNA(Tyr) + L-tyrosine + ATP = L-tyrosyl-tRNA(Tyr) + AMP + diphosphate + H(+). Catalyzes the attachment of tyrosine to tRNA(Tyr) in a two-step reaction: tyrosine is first activated by ATP to form Tyr-AMP and then transferred to the acceptor end of tRNA(Tyr). This chain is Tyrosine--tRNA ligase, found in Rhizobium meliloti (strain 1021) (Ensifer meliloti).